We begin with the raw amino-acid sequence, 158 residues long: MKEIVLAGGCFWGVEAYMERIDGVVETKVGYANGHVENPSYEEVCSSQTGHAEVCYIKFDETKISLEILLNGFWKIIDPTVENRQGPDIGSQYRTGIYYGHEEDLDTIIKSKEMQQKKYDANIVTEIEPLKAFYDAEEYHQKYLKKNPGGYCHINLEI.

The active site involves C10.

Belongs to the MsrA Met sulfoxide reductase family.

It catalyses the reaction L-methionyl-[protein] + [thioredoxin]-disulfide + H2O = L-methionyl-(S)-S-oxide-[protein] + [thioredoxin]-dithiol. The enzyme catalyses [thioredoxin]-disulfide + L-methionine + H2O = L-methionine (S)-S-oxide + [thioredoxin]-dithiol. Its function is as follows. Has an important function as a repair enzyme for proteins that have been inactivated by oxidation. Catalyzes the reversible oxidation-reduction of methionine sulfoxide in proteins to methionine. The protein is Peptide methionine sulfoxide reductase MsrA of Alkaliphilus metalliredigens (strain QYMF).